A 577-amino-acid polypeptide reads, in one-letter code: Probable HECT-type ubiquitin ligase-interacting protein creD (577 aa).

Disordered stretches follow at residues 376-398 (LDPA…GTLS) and 428-566 (NLHA…EEER). Composition is skewed to polar residues over residues 428 to 447 (NLHA…NQLE) and 460 to 472 (SSGS…TSPE). Positions 473-486 (LSRRPSDEVDHDHV) are enriched in basic and acidic residues. Polar residues predominate over residues 528 to 544 (SPQQAHVRSANRSSSYF).

This sequence belongs to the arrestin family. As to quaternary structure, interacts with hulA.

Functionally, component of the regulatory network controlling carbon source utilization through ubiquitination and deubiquitination involving creA, creB, creC, creD and acrB. May be involved in signaling by recognizing appropriately phosphorylated substrates via its arrestin domains and then recruit a HECT-type ubiquitin ligase such as hulA, leading to ubiquitination of the substrate, providing a link between ubiquitination and phosphorylation in protein regulation and stability. The polypeptide is Probable HECT-type ubiquitin ligase-interacting protein creD (creD) (Aspergillus terreus (strain NIH 2624 / FGSC A1156)).